A 358-amino-acid polypeptide reads, in one-letter code: Phospho-N-acetylmuramoyl-pentapeptide-transferase (358 aa).

10 consecutive transmembrane segments (helical) span residues threonine 26–arginine 46, threonine 71–alanine 91, leucine 93–phenylalanine 113, methionine 134–phenylalanine 154, leucine 170–asparagine 190, glycine 197–alanine 217, alanine 234–phenylalanine 254, valine 261–leucine 281, isoleucine 286–valine 306, and lysine 335–leucine 355.

This sequence belongs to the glycosyltransferase 4 family. MraY subfamily. The cofactor is Mg(2+).

It is found in the cell inner membrane. The enzyme catalyses UDP-N-acetyl-alpha-D-muramoyl-L-alanyl-gamma-D-glutamyl-meso-2,6-diaminopimeloyl-D-alanyl-D-alanine + di-trans,octa-cis-undecaprenyl phosphate = di-trans,octa-cis-undecaprenyl diphospho-N-acetyl-alpha-D-muramoyl-L-alanyl-D-glutamyl-meso-2,6-diaminopimeloyl-D-alanyl-D-alanine + UMP. The protein operates within cell wall biogenesis; peptidoglycan biosynthesis. In terms of biological role, catalyzes the initial step of the lipid cycle reactions in the biosynthesis of the cell wall peptidoglycan: transfers peptidoglycan precursor phospho-MurNAc-pentapeptide from UDP-MurNAc-pentapeptide onto the lipid carrier undecaprenyl phosphate, yielding undecaprenyl-pyrophosphoryl-MurNAc-pentapeptide, known as lipid I. The chain is Phospho-N-acetylmuramoyl-pentapeptide-transferase from Trichlorobacter lovleyi (strain ATCC BAA-1151 / DSM 17278 / SZ) (Geobacter lovleyi).